Consider the following 240-residue polypeptide: MADS-box transcription factor 27 (240 aa).

One can recognise an MADS-box domain in the interval 1-61; that stretch reads MGRGKIVIRR…GRLYEYSSTS (61 aa). The region spanning 86–176 is the K-box domain; that stretch reads LKFWQREAAS…YKKISLIRQE (91 aa). A compositionally biased stretch (polar residues) spans 220–231; sequence LPQHSDAEQSTA. The segment at 220–240 is disordered; it reads LPQHSDAEQSTAPKLGLQLNP.

Ubiquitous.

It localises to the nucleus. Its function is as follows. Probable transcription factor. This Oryza sativa subsp. japonica (Rice) protein is MADS-box transcription factor 27 (MADS27).